Reading from the N-terminus, the 287-residue chain is 3-methyl-2-oxobutanoate hydroxymethyltransferase (287 aa).

2 residues coordinate Mg(2+): Asp-57 and Asp-96. Residues 57–58 (DS), Asp-96, and Lys-125 contribute to the 3-methyl-2-oxobutanoate site. Residue Glu-127 coordinates Mg(2+). The active-site Proton acceptor is Glu-194.

It belongs to the PanB family. In terms of assembly, homodecamer; pentamer of dimers. It depends on Mg(2+) as a cofactor.

The protein localises to the cytoplasm. It catalyses the reaction 3-methyl-2-oxobutanoate + (6R)-5,10-methylene-5,6,7,8-tetrahydrofolate + H2O = 2-dehydropantoate + (6S)-5,6,7,8-tetrahydrofolate. Its pathway is cofactor biosynthesis; (R)-pantothenate biosynthesis; (R)-pantoate from 3-methyl-2-oxobutanoate: step 1/2. Functionally, catalyzes the reversible reaction in which hydroxymethyl group from 5,10-methylenetetrahydrofolate is transferred onto alpha-ketoisovalerate to form ketopantoate. In Methylobacterium sp. (strain 4-46), this protein is 3-methyl-2-oxobutanoate hydroxymethyltransferase.